The chain runs to 117 residues: Acylphosphatase (117 aa).

The Acylphosphatase-like domain occupies 21–107; that stretch reads RWRFRIRGLV…TGADWFEIRP (87 aa). Residues arginine 36 and asparagine 54 contribute to the active site.

Belongs to the acylphosphatase family.

It carries out the reaction an acyl phosphate + H2O = a carboxylate + phosphate + H(+). The chain is Acylphosphatase (acyP) from Synechococcus sp. (strain RCC307).